The following is a 296-amino-acid chain: Diheme cytochrome c-type (296 aa).

Cys-52, Cys-55, His-56, Cys-202, Cys-205, and His-206 together coordinate heme c.

Post-translationally, binds 2 heme c groups covalently per subunit.

The protein resides in the cell membrane. In terms of biological role, particularly expressed when cells generate energy via aerobic respiration. The protein is Diheme cytochrome c-type (cycG) of Cereibacter sphaeroides (strain ATCC 17023 / DSM 158 / JCM 6121 / CCUG 31486 / LMG 2827 / NBRC 12203 / NCIMB 8253 / ATH 2.4.1.) (Rhodobacter sphaeroides).